A 537-amino-acid chain; its full sequence is Extracellular exo-inulinase inuE (537 aa).

The N-terminal stretch at methionine 1–alanine 19 is a signal peptide. Aspartate 41 is an active-site residue. N-linked (GlcNAc...) asparagine glycans are attached at residues asparagine 49, asparagine 67, asparagine 112, asparagine 300, asparagine 363, asparagine 398, asparagine 430, and asparagine 531.

This sequence belongs to the glycosyl hydrolase 32 family.

The protein resides in the secreted. It catalyses the reaction Hydrolysis of terminal, non-reducing (2-&gt;1)- and (2-&gt;6)-linked beta-D-fructofuranose residues in fructans.. In terms of biological role, exo-inulinase involved in utilization of the plant storage polymer inulin, consisting of fructooligosaccharides with a degree of polymerization (DP) value from 2 to 60. Splits off terminal fructose units successively from the non-reducing end of the inulin molecule, and also hydrolyze sucrose and raffinose. The protein is Extracellular exo-inulinase inuE (inuE) of Aspergillus niger (strain ATCC MYA-4892 / CBS 513.88 / FGSC A1513).